Here is a 405-residue protein sequence, read N- to C-terminus: Imidazolonepropionase (405 aa).

The Fe(3+) site is built by H73 and H75. Zn(2+) is bound by residues H73 and H75. Positions 82, 145, and 178 each coordinate 4-imidazolone-5-propanoate. Position 145 (Y145) interacts with N-formimidoyl-L-glutamate. A Fe(3+)-binding site is contributed by H243. H243 serves as a coordination point for Zn(2+). Residue Q246 coordinates 4-imidazolone-5-propanoate. D318 provides a ligand contact to Fe(3+). A Zn(2+)-binding site is contributed by D318. 2 residues coordinate N-formimidoyl-L-glutamate: N320 and G322. T323 lines the 4-imidazolone-5-propanoate pocket.

The protein belongs to the metallo-dependent hydrolases superfamily. HutI family. It depends on Zn(2+) as a cofactor. The cofactor is Fe(3+).

The protein localises to the cytoplasm. It catalyses the reaction 4-imidazolone-5-propanoate + H2O = N-formimidoyl-L-glutamate. The protein operates within amino-acid degradation; L-histidine degradation into L-glutamate; N-formimidoyl-L-glutamate from L-histidine: step 3/3. Its function is as follows. Catalyzes the hydrolytic cleavage of the carbon-nitrogen bond in imidazolone-5-propanoate to yield N-formimidoyl-L-glutamate. It is the third step in the universal histidine degradation pathway. The sequence is that of Imidazolonepropionase from Brucella suis (strain ATCC 23445 / NCTC 10510).